Here is a 117-residue protein sequence, read N- to C-terminus: Basic phospholipase A2 pseudexin A chain (117 aa).

7 disulfide bridges follow: Cys11/Cys71, Cys27/Cys117, Cys29/Cys45, Cys44/Cys98, Cys51/Cys91, Cys60/Cys84, and Cys78/Cys89. The Ca(2+) site is built by Tyr28, Gly30, and Gly32. His48 is an active-site residue. Asp49 lines the Ca(2+) pocket. Residue Asp92 is part of the active site.

It belongs to the phospholipase A2 family. Group I subfamily. D49 sub-subfamily. Requires Ca(2+) as cofactor. Expressed by the venom gland.

It localises to the secreted. It carries out the reaction a 1,2-diacyl-sn-glycero-3-phosphocholine + H2O = a 1-acyl-sn-glycero-3-phosphocholine + a fatty acid + H(+). Functionally, PLA2 catalyzes the calcium-dependent hydrolysis of the 2-acyl groups in 3-sn-phosphoglycerides. The chain is Basic phospholipase A2 pseudexin A chain from Pseudechis porphyriacus (Red-bellied black snake).